Reading from the N-terminus, the 267-residue chain is Putative F-box protein At5g38810 (267 aa).

The F-box domain occupies 4–53; sequence RKTFDSIPDDLFVEIALRLSSKSIARCRCVSKLWASILYRQDFTELFITK.

In Arabidopsis thaliana (Mouse-ear cress), this protein is Putative F-box protein At5g38810.